We begin with the raw amino-acid sequence, 704 residues long: Neutral ceramidase (704 aa).

Positions 1–23 (MANSKMAFLAFLAVSFLCGLVSA) are cleaved as a signal peptide. A glycan (N-linked (GlcNAc...) asparagine) is linked at Asn-230. Residue Ser-276 is the Nucleophile of the active site. N-linked (GlcNAc...) asparagine glycans are attached at residues Asn-362, Asn-550, and Asn-598.

This sequence belongs to the neutral ceramidase family. In terms of processing, N-glycosylated. As to expression, widely expressed in different tissues but enriched in neurons at all stages of development.

Its subcellular location is the secreted. The catalysed reaction is an N-acylsphing-4-enine + H2O = sphing-4-enine + a fatty acid. In terms of biological role, hydrolyzes the sphingolipid ceramide into sphingosine and free fatty acid at an optimal pH of 6.5-7.5. Acts as a key regulator of sphingolipid signaling metabolites by generating sphingosine at the cell surface. Regulates synaptic vesicle exocytosis and trafficking by controlling presynaptic terminal sphingolipid composition. This is Neutral ceramidase (CDase) from Drosophila melanogaster (Fruit fly).